The following is a 187-amino-acid chain: Probable nicotinate-nucleotide adenylyltransferase (187 aa).

It belongs to the NadD family.

It carries out the reaction nicotinate beta-D-ribonucleotide + ATP + H(+) = deamido-NAD(+) + diphosphate. The protein operates within cofactor biosynthesis; NAD(+) biosynthesis; deamido-NAD(+) from nicotinate D-ribonucleotide: step 1/1. Catalyzes the reversible adenylation of nicotinate mononucleotide (NaMN) to nicotinic acid adenine dinucleotide (NaAD). The protein is Probable nicotinate-nucleotide adenylyltransferase of Anaeromyxobacter dehalogenans (strain 2CP-C).